The primary structure comprises 192 residues: Elongation factor P (192 aa).

At lysine 38 the chain carries N6-(3,6-diaminohexanoyl)-5-hydroxylysine.

It belongs to the elongation factor P family. Post-translationally, may be beta-lysylated on the epsilon-amino group of Lys-38 by the combined action of EpmA and EpmB, and then hydroxylated on the C5 position of the same residue by EpmC (if this protein is present). Lysylation is critical for the stimulatory effect of EF-P on peptide-bond formation. The lysylation moiety may extend toward the peptidyltransferase center and stabilize the terminal 3-CCA end of the tRNA. Hydroxylation of the C5 position on Lys-38 may allow additional potential stabilizing hydrogen-bond interactions with the P-tRNA.

The protein resides in the cytoplasm. The protein operates within protein biosynthesis; polypeptide chain elongation. Involved in peptide bond synthesis. Alleviates ribosome stalling that occurs when 3 or more consecutive Pro residues or the sequence PPG is present in a protein, possibly by augmenting the peptidyl transferase activity of the ribosome. Modification of Lys-38 is required for alleviation. This Mannheimia succiniciproducens (strain KCTC 0769BP / MBEL55E) protein is Elongation factor P.